The chain runs to 548 residues: Beta-lactamase-like protein 2 (548 aa).

Residues 1–24 (MKIMNKQSITIFLIICFLINLILS) form the signal peptide. N-linked (GlcNAc...) asparagine glycans are attached at residues Asn237, Asn258, Asn443, and Asn459.

The protein belongs to the beta-lactamase family.

The protein localises to the secreted. The polypeptide is Beta-lactamase-like protein 2 (Dictyostelium discoideum (Social amoeba)).